The following is a 313-amino-acid chain: Formate-nitrite transporter (313 aa).

The Cytoplasmic segment spans residues 1–46 (MTKGSKYTIDPISVKTACTSEESYIRCVEYGKGKAHYPNLSLLAKA). Residues 47–67 (ILAGVFVGVCAHASGIAGGHF) form a helical membrane-spanning segment. Topologically, residues 68–77 (YYHKLREHVG) are extracellular. A helical transmembrane segment spans residues 78 to 98 (ISMSAFVYGFTFPIAFLCIIA). Residues 99 to 127 (TGSDLFTGNTLAVTTALLQRKVTLLEYLR) are Cytoplasmic-facing. Residues 128–148 (VMSISLFGNYVGAVSFAFFVS) form a helical membrane-spanning segment. At 149-184 (HLSGAFKKHEEIGKNHIFQFLNDIAEKKVSHTFVQC) the chain is on the extracellular side. Residues 185–205 (VCLAIGCNIFVCLAVYFVLTI) form a helical membrane-spanning segment. The Cytoplasmic portion of the chain corresponds to 206 to 210 (KDGSG). The helical transmembrane segment at 211 to 231 (MVFSVFFAVYAFAIAGYEHII) threads the bilayer. The Extracellular segment spans residues 232-256 (ANMYTLNLALMIEANVDWTKVYVDN). A helical transmembrane segment spans residues 257-277 (LLPTLIGNYIAGAIVLACPLF). Residues 278–313 (YIYRHSYSDYEKTRGDGGNSGLKSLSIEMQNGSSGR) are Cytoplasmic-facing. Residues 290 to 313 (TRGDGGNSGLKSLSIEMQNGSSGR) are disordered. Polar residues predominate over residues 298–313 (GLKSLSIEMQNGSSGR).

This sequence belongs to the FNT transporter (TC 1.A.16) family. Homopentamer.

It is found in the cell membrane. The protein localises to the vacuole membrane. It carries out the reaction (S)-lactate(in) + H(+)(in) = (S)-lactate(out) + H(+)(out). The catalysed reaction is formate(in) + H(+)(in) = formate(out) + H(+)(out). It catalyses the reaction pyruvate(out) + H(+)(out) = pyruvate(in) + H(+)(in). The enzyme catalyses acetate(out) + H(+)(out) = acetate(in) + H(+)(in). Inhibited by the Malaria Box compound MMV007839 and its derivatives BH296 and BH267.meta. Functionally, monocarboxylate-proton symporter that mediates the efflux of the waste product lactate in the intraerythrocytic parasites; active in acidic-to-neutral pH range. Transports L-lactate. The polypeptide is Formate-nitrite transporter (Plasmodium vivax).